Reading from the N-terminus, the 493-residue chain is MEGATTKPRLVPSTRFALSLVMFFGCLVTYMMRTNMSFAVVCMVNENKTDTGVEKVSRCGKEMTPVESNSSVIGEFDWDKQTTGMVLSSFFYGYIGSQIIGGHLASRYGGKRVVFVTILGSALLTLLNPVAARTSEYALAILRAAIGFLQGATFPAMHTMWSVWGPPLELSVLTGVTYAGAQIGNVIVLPLSGFLCEYGFDGGWPSIFYIIGVFGVLWTAVWWYVSSDKPATHPRITPEEKQYIVTAVEASMGKDTGKVPSTPWIKILTSPAVWACWAGHFAGDWGAYTMLVSLPSFLKDVLGLNLSSLGAVASIPYIAYFLAINAGGVLADTLRSKGILSTLNTRRAAMLVALIGQGIFLVASGYCGCGQDVLVIIFITCGMAISGLQYAGFVVNYLEIAPPFSGTVMGTGNTISALAGIISPAVSSYLTPNGTQEEWQMVLWLTAGILTIGALLFSIFASGEVQPWAKLTAEEGHEMAPLREGEKIELATA.

A helical membrane pass occupies residues Leu-10 to Tyr-30. Asn-35, Asn-47, and Asn-69 each carry an N-linked (GlcNAc...) asparagine glycan. A run of 6 helical transmembrane segments spans residues Met-85–Ala-105, Arg-112–Ala-132, Ala-144–Trp-164, Gly-175–Leu-195, Pro-205–Val-225, and Ala-272–Val-292. The N-linked (GlcNAc...) asparagine glycan is linked to Asn-305. A run of 4 helical transmembrane segments spans residues Ala-311 to Ala-331, Ala-348 to Gly-368, Val-375 to Val-395, and Gly-406 to Val-426. The N-linked (GlcNAc...) asparagine glycan is linked to Asn-433. Residues Met-441–Ala-461 form a helical membrane-spanning segment.

This sequence belongs to the major facilitator superfamily. Sodium/anion cotransporter family.

The protein localises to the membrane. This is an uncharacterized protein from Caenorhabditis elegans.